The chain runs to 516 residues: D-alanine--D-alanyl carrier protein ligase (516 aa).

Residue 156-157 (TS) coordinates ATP. D-alanine is bound at residue Asp-203. 298-303 (NAYGPT) is an ATP binding site. Val-307 is a binding site for D-alanine. Residues Asp-389, 401–404 (YGGR), and Lys-503 each bind ATP. D-alanine is bound at residue Lys-503.

The protein belongs to the ATP-dependent AMP-binding enzyme family. DltA subfamily.

It is found in the cytoplasm. It catalyses the reaction holo-[D-alanyl-carrier protein] + D-alanine + ATP = D-alanyl-[D-alanyl-carrier protein] + AMP + diphosphate. Its pathway is cell wall biogenesis; lipoteichoic acid biosynthesis. Functionally, catalyzes the first step in the D-alanylation of lipoteichoic acid (LTA), the activation of D-alanine and its transfer onto the D-alanyl carrier protein (Dcp) DltC. In an ATP-dependent two-step reaction, forms a high energy D-alanyl-AMP intermediate, followed by transfer of the D-alanyl residue as a thiol ester to the phosphopantheinyl prosthetic group of the Dcp. D-alanylation of LTA plays an important role in modulating the properties of the cell wall in Gram-positive bacteria, influencing the net charge of the cell wall. The polypeptide is D-alanine--D-alanyl carrier protein ligase (Streptococcus pneumoniae (strain 70585)).